We begin with the raw amino-acid sequence, 249 residues long: Pyridoxine 5'-phosphate synthase (249 aa).

N7 is a binding site for 3-amino-2-oxopropyl phosphate. Position 9 to 10 (9 to 10 (DH)) interacts with 1-deoxy-D-xylulose 5-phosphate. R18 contacts 3-amino-2-oxopropyl phosphate. Residue H43 is the Proton acceptor of the active site. 1-deoxy-D-xylulose 5-phosphate contacts are provided by R45 and H50. E70 functions as the Proton acceptor in the catalytic mechanism. A 1-deoxy-D-xylulose 5-phosphate-binding site is contributed by T100. H198 serves as the catalytic Proton donor. Residues A199 and 220–221 (GH) each bind 3-amino-2-oxopropyl phosphate.

It belongs to the PNP synthase family. Homooctamer; tetramer of dimers.

Its subcellular location is the cytoplasm. The catalysed reaction is 3-amino-2-oxopropyl phosphate + 1-deoxy-D-xylulose 5-phosphate = pyridoxine 5'-phosphate + phosphate + 2 H2O + H(+). It functions in the pathway cofactor biosynthesis; pyridoxine 5'-phosphate biosynthesis; pyridoxine 5'-phosphate from D-erythrose 4-phosphate: step 5/5. In terms of biological role, catalyzes the complicated ring closure reaction between the two acyclic compounds 1-deoxy-D-xylulose-5-phosphate (DXP) and 3-amino-2-oxopropyl phosphate (1-amino-acetone-3-phosphate or AAP) to form pyridoxine 5'-phosphate (PNP) and inorganic phosphate. This Azoarcus sp. (strain BH72) protein is Pyridoxine 5'-phosphate synthase.